We begin with the raw amino-acid sequence, 199 residues long: Prolactin (199 aa).

Cysteine 4 and cysteine 11 are joined by a disulfide. A Phosphoserine modification is found at serine 26. Residue asparagine 31 is glycosylated (N-linked (GlcNAc...) asparagine; partial). Residues serine 34 and serine 90 each carry the phosphoserine modification. 2 cysteine pairs are disulfide-bonded: cysteine 58–cysteine 174 and cysteine 191–cysteine 199.

It belongs to the somatotropin/prolactin family. As to quaternary structure, interacts with PRLR.

The protein resides in the secreted. In terms of biological role, prolactin acts primarily on the mammary gland by promoting lactation. This Camelus dromedarius (Dromedary) protein is Prolactin (PRL).